The following is a 147-amino-acid chain: Hemoglobin subunit beta (147 aa).

The residue at position 2 (valine 2) is an N-acetylvaline. The region spanning 3–147 (HLTAEEKSAV…VANALAHKYH (145 aa)) is the Globin domain. Threonine 13 bears the Phosphothreonine mark. Position 45 is a phosphoserine (serine 45). Residue lysine 60 is modified to N6-acetyllysine. Histidine 64 contacts heme b. Lysine 83 bears the N6-acetyllysine mark. Histidine 93 serves as a coordination point for heme b. Residue cysteine 94 is modified to S-nitrosocysteine. Lysine 145 is subject to N6-acetyllysine.

This sequence belongs to the globin family. As to quaternary structure, heterotetramer of two alpha chains and two beta chains. Red blood cells.

Involved in oxygen transport from the lung to the various peripheral tissues. This chain is Hemoglobin subunit beta (HBB), found in Sapajus apella (Brown-capped capuchin).